Here is a 92-residue protein sequence, read N- to C-terminus: Small ribosomal subunit protein uS19 (92 aa).

This sequence belongs to the universal ribosomal protein uS19 family.

Functionally, protein S19 forms a complex with S13 that binds strongly to the 16S ribosomal RNA. This Rhodospirillum centenum (strain ATCC 51521 / SW) protein is Small ribosomal subunit protein uS19.